A 446-amino-acid chain; its full sequence is MPGLRHPSVLRAMTRAVADVSAARSALQVLGPRPDHELVDSSRAIVAATDAEAGGSRRVPEGDLEACRAVVRLEETHDAYEALLQEAEGRLEAVYRSAMEGKDLEEPDGRDESAAAAAGDDAAVQEEVIAVLRQAEEGKPVESVRLVDRQLRHLPEAFGRIQGLRVLDVSRNQLEVIPDAIGGLDHLEELRLASNALISLPDSIGLLLNLRILNVGSNRLRSLPDSISKCRSLIELDASYNGLAYLPTNIGYELVNLRKLWVHMNKLRSLPSSICEMRSLYLLDAHFNELCGLPSAIGKLSSLEILNLSSNFSDLKDLPASFGDLLNLRELDLSNNQIHALPDNFGRLDKLEKLNLEQNPLSMPPMEIVNKGVDAVKEYMLQRWLDILLEEERKSIAAAESPQAPTTPSAWLARSVSWVSDVSGSLVGYLSGENKTEKDAYLDQQY.

Residues glutamate 65 to glutamate 100 are a coiled coil. Residues glycine 101–aspartate 121 form a disordered region. 10 LRR repeats span residues glycine 138–arginine 160, isoleucine 161–leucine 184, aspartate 185–leucine 207, leucine 208–cysteine 230, serine 232–leucine 254, valine 255–methionine 277, serine 279–leucine 300, serine 301–aspartate 324, leucine 325–arginine 347, and aspartate 349–lysine 371. A GVYW motif is present at residues glycine 372–tryptophan 384.

This sequence belongs to the SHOC2 family. As to expression, widely expressed.

Functionally, leucine-rich repeat protein that likely mediates protein interactions, possibly in the context of signal transduction. This chain is Plant intracellular Ras-group-related LRR protein 3 (IRL3), found in Oryza sativa subsp. japonica (Rice).